Here is a 143-residue protein sequence, read N- to C-terminus: Flagellar assembly factor FliW (143 aa).

It belongs to the FliW family. In terms of assembly, interacts with translational regulator CsrA and flagellin(s).

The protein localises to the cytoplasm. Functionally, acts as an anti-CsrA protein, binds CsrA and prevents it from repressing translation of its target genes, one of which is flagellin. Binds to flagellin and participates in the assembly of the flagellum. This Clostridium botulinum (strain Okra / Type B1) protein is Flagellar assembly factor FliW.